Reading from the N-terminus, the 82-residue chain is Acyl carrier protein (82 aa).

The Carrier domain occupies 3–81 (SSEQEILAGL…DAVTYIAGAQ (79 aa)). Serine 41 is modified (O-(pantetheine 4'-phosphoryl)serine).

Belongs to the acyl carrier protein (ACP) family. Post-translationally, 4'-phosphopantetheine is transferred from CoA to a specific serine of apo-ACP by AcpS. This modification is essential for activity because fatty acids are bound in thioester linkage to the sulfhydryl of the prosthetic group.

The protein resides in the cytoplasm. The protein operates within lipid metabolism; fatty acid biosynthesis. Carrier of the growing fatty acid chain in fatty acid biosynthesis. This is Acyl carrier protein from Beutenbergia cavernae (strain ATCC BAA-8 / DSM 12333 / CCUG 43141 / JCM 11478 / NBRC 16432 / NCIMB 13614 / HKI 0122).